The chain runs to 221 residues: MALPNQQTVDYPSFKLVIVGDGGTGKTTFVKRHLTGEFEKKYEPTIGVEVHPLDFFTNCGKIRFYCWDTAGQEKFGGLRDGYYIHGQCAIIMFDVTARLTYKNVPTWHRDLCRVCENIPIVLCGNKVDVKNRQVKAKQVTFHRKKNLQYYEISAKSNYNFEKPFLYLARKLAGDGNLHFVESPALAPPEVQIDLAAQALHEQELQAALNQPLPDDDDEAFE.

Residues 10 to 174 (DYPSFKLVIV…LYLARKLAGD (165 aa)) form the Small GTPase Ran-type domain. 21-28 (DGGTGKTT) contacts GTP. Residues 40-48 (KKYEPTIGV) are switch-I. Residues G71, 125–128 (NKVD), and 153–155 (SAK) contribute to the GTP site. The switch-II stretch occupies residues 71 to 87 (GQEKFGGLRDGYYIHGQ).

This sequence belongs to the small GTPase superfamily. Ran family. In terms of assembly, found in a nuclear export complex with RanGTP, exportin and pre-miRNA.

It localises to the nucleus. GTP-binding protein involved in nucleocytoplasmic transport. Required for the import of protein into the nucleus and also for RNA export. Involved in chromatin condensation and control of cell cycle. This is GTP-binding nuclear protein Ran2 (RAN2) from Solanum lycopersicum (Tomato).